A 404-amino-acid polypeptide reads, in one-letter code: Alpha-galactosidase A (404 aa).

Residues M1–A23 form the signal peptide. Cystine bridges form between C45–C77 and C124–C154. Catalysis depends on D152, which acts as the Nucleophile. E185–N189 is a binding site for substrate. The active-site Proton donor is D207.

Belongs to the glycosyl hydrolase 27 family.

It catalyses the reaction Hydrolysis of terminal, non-reducing alpha-D-galactose residues in alpha-D-galactosides, including galactose oligosaccharides, galactomannans and galactolipids.. Its function is as follows. Hydrolyzes galactomannan found in plant cell wall, by cleaving alpha-1,6-D-galactose side-chains from the mannan backbone. Appears to act in synergy with mannanase (ManA) to elicit hydrolysis of galactomannan. Has greater activity against galactomannans with decreased degree of polymerisation values. To a lesser extent, is also able to degrade other galactosides containing alpha-1,6-linked D-galactose, such as melibiose and stachyose. The protein is Alpha-galactosidase A (agaA) of Cellvibrio japonicus (strain Ueda107) (Pseudomonas fluorescens subsp. cellulosa).